The chain runs to 374 residues: MIFQTTSEDLRTRARTGILNLNGVKLETPVFMPVGTRGVVKTISADDLEELEYSLILGNTYHLYLRPGTAVLERFGGLKKFSTWKRALLTDSGGYQVFSLNSLFKYEQDGVRFQSHIDGSRHYFTPNSVIDIQRTIGSDIMMVLDDCAPFDSSQERLRQSLDRTHRWAEMSVEYWEKNKNSSHLFGIFQGGIDLGLRLESLQKIVSLPFDGIAIGGLSVGEPRKDFIRILEGVSAYTDRSRPLYLMGVGTVPDILDGVKNGVDMFDCVLPTRNARNGQVFTSLGKINLRNEKWKSSDVPIDPHCGCKVCKRYSIGYIRHLHHVGELTAFSLSTYHNLYFMKNFLSEIRKSIQAGEFLKIYAKWKNLYEKPEFSG.

Residue Asp91 is the Proton acceptor of the active site. Substrate-binding positions include 91–95, Asp145, Gln189, and Gly216; that span reads DSGGY. An RNA binding region spans residues 247–253; the sequence is GVGTVPD. Residue Asp266 is the Nucleophile of the active site. The interval 271–275 is RNA binding; important for wobble base 34 recognition; the sequence is TRNAR. Positions 304, 306, 309, and 335 each coordinate Zn(2+).

This sequence belongs to the queuine tRNA-ribosyltransferase family. As to quaternary structure, homodimer. Within each dimer, one monomer is responsible for RNA recognition and catalysis, while the other monomer binds to the replacement base PreQ1. The cofactor is Zn(2+).

It catalyses the reaction 7-aminomethyl-7-carbaguanine + guanosine(34) in tRNA = 7-aminomethyl-7-carbaguanosine(34) in tRNA + guanine. It participates in tRNA modification; tRNA-queuosine biosynthesis. Its function is as follows. Catalyzes the base-exchange of a guanine (G) residue with the queuine precursor 7-aminomethyl-7-deazaguanine (PreQ1) at position 34 (anticodon wobble position) in tRNAs with GU(N) anticodons (tRNA-Asp, -Asn, -His and -Tyr). Catalysis occurs through a double-displacement mechanism. The nucleophile active site attacks the C1' of nucleotide 34 to detach the guanine base from the RNA, forming a covalent enzyme-RNA intermediate. The proton acceptor active site deprotonates the incoming PreQ1, allowing a nucleophilic attack on the C1' of the ribose to form the product. After dissociation, two additional enzymatic reactions on the tRNA convert PreQ1 to queuine (Q), resulting in the hypermodified nucleoside queuosine (7-(((4,5-cis-dihydroxy-2-cyclopenten-1-yl)amino)methyl)-7-deazaguanosine). This Leptospira borgpetersenii serovar Hardjo-bovis (strain JB197) protein is Queuine tRNA-ribosyltransferase.